The sequence spans 340 residues: MKKTLIALSVSAAAVATGVNAAELYNQDGTSLDMGGRAEARLSMKDGKVADNSRIRLNFLGKVEIQDGLYGVGFYEGEFTTADNADGSDLDNRYTYAGLGGKFGEVTYGKNDGALGVITDFTDIMAYHGNSAADKIAVADRVDNMMSYKGQFDALSVKASYRFADRADSSKNNVDNTYIDNGKDGYSLSAIYAIGQTGLTLGGGYADQDKSNEYMLAASYTMGDLYFAGVFTDGEKDYGTNGDYSHRGFSSVEDYTGYELAAKYTMGQTVFTTTYNNAETDGYTSTDNFAVDATYYFKPNFRGYVSYNFNLLDAGDKIGTSTISKADAEDELALGLRYDF.

Positions 1-21 (MKKTLIALSVSAAAVATGVNA) are cleaved as a signal peptide.

This sequence belongs to the Gram-negative porin family. In terms of assembly, homotrimer.

It localises to the cell outer membrane. In terms of biological role, forms pores that allow passive diffusion of small molecules across the outer membrane. The sequence is that of Outer membrane protein U (ompU) from Vibrio vulnificus (strain CMCP6).